Here is a 574-residue protein sequence, read N- to C-terminus: PI-PLC X domain-containing protein DDB_G0269228 (574 aa).

The segment at 1 to 42 (MFSSIMFKKKPKQNLNENEITSQSTTTTSTLSDSKPSEKKIK) is disordered. Residues 21-34 (TSQSTTTTSTLSDS) show a composition bias toward low complexity. The region spanning 270 to 449 (GIKSSSLRVP…LKKRIINDDG (180 aa)) is the PI-PLC X-box domain.

This chain is PI-PLC X domain-containing protein DDB_G0269228, found in Dictyostelium discoideum (Social amoeba).